The sequence spans 405 residues: Palmitoyltransferase PFA3 (405 aa).

At 1–27 (MLISHPRIMIRHAPWVTSIETFCCSLA) the chain is on the cytoplasmic side. Residues 28–48 (TLFPKVFYTSVLTWSVYALIV) form a helical membrane-spanning segment. At 49–62 (HGCYDTLMTTQETS) the chain is on the lumenal side. The chain crosses the membrane as a helical span at residues 63 to 83 (IFAIAIGLIGLTLYILCLYTY). At 84–214 (FKVLRAGPGS…GFYNHKFFAQ (131 aa)) the chain is on the cytoplasmic side. Positions 167–217 (RYCTKCSVWKPDRCHHCSTCNRCVLRMDHHCPWFAMCVGFYNHKFFAQFLM) constitute a DHHC domain. A helical membrane pass occupies residues 215 to 235 (FLMYLTAYSGFDFVVSLSILW). Topologically, residues 236–251 (KFFADEKYNDHYLSLN) are lumenal. A helical membrane pass occupies residues 252–272 (LVFLFVLSLAFFITVGGFSAF). The Cytoplasmic portion of the chain corresponds to 273–405 (SLYLVFRNKT…ANQTTDTNPF (133 aa)).

The protein belongs to the DHHC palmitoyltransferase family. PFA3 subfamily. Post-translationally, autopalmitoylated.

The protein localises to the vacuole membrane. It carries out the reaction L-cysteinyl-[protein] + hexadecanoyl-CoA = S-hexadecanoyl-L-cysteinyl-[protein] + CoA. Functionally, palmitoyltransferase specific for VAC8. Palmitoylates VAC8 at one or more of its N-terminal cysteine residues, which is required for its proper membrane localization. The polypeptide is Palmitoyltransferase PFA3 (PFA3) (Debaryomyces hansenii (strain ATCC 36239 / CBS 767 / BCRC 21394 / JCM 1990 / NBRC 0083 / IGC 2968) (Yeast)).